The primary structure comprises 305 residues: GMP synthase [glutamine-hydrolyzing] subunit B (305 aa).

The GMPS ATP-PPase domain maps to 2-185; it reads VETEEFIAEA…LGLEEVISER (184 aa). 29–35 provides a ligand contact to ATP; that stretch reads SGGVDSS.

In terms of assembly, heterodimer composed of a glutamine amidotransferase subunit (A) and a GMP-binding subunit (B).

It carries out the reaction XMP + L-glutamine + ATP + H2O = GMP + L-glutamate + AMP + diphosphate + 2 H(+). It functions in the pathway purine metabolism; GMP biosynthesis; GMP from XMP (L-Gln route): step 1/1. Its function is as follows. Catalyzes the synthesis of GMP from XMP. This chain is GMP synthase [glutamine-hydrolyzing] subunit B, found in Halorubrum lacusprofundi (strain ATCC 49239 / DSM 5036 / JCM 8891 / ACAM 34).